A 320-amino-acid polypeptide reads, in one-letter code: o-succinylbenzoate synthase (320 aa).

Lys-133 serves as the catalytic Proton donor. Asp-161, Glu-190, and Asp-213 together coordinate Mg(2+). Residue Lys-235 is the Proton acceptor of the active site.

The protein belongs to the mandelate racemase/muconate lactonizing enzyme family. MenC type 1 subfamily. A divalent metal cation is required as a cofactor.

The enzyme catalyses (1R,6R)-6-hydroxy-2-succinyl-cyclohexa-2,4-diene-1-carboxylate = 2-succinylbenzoate + H2O. It participates in quinol/quinone metabolism; 1,4-dihydroxy-2-naphthoate biosynthesis; 1,4-dihydroxy-2-naphthoate from chorismate: step 4/7. The protein operates within quinol/quinone metabolism; menaquinone biosynthesis. Converts 2-succinyl-6-hydroxy-2,4-cyclohexadiene-1-carboxylate (SHCHC) to 2-succinylbenzoate (OSB). The chain is o-succinylbenzoate synthase from Escherichia coli O7:K1 (strain IAI39 / ExPEC).